Reading from the N-terminus, the 356-residue chain is S-adenosylmethionine:tRNA ribosyltransferase-isomerase (356 aa).

This sequence belongs to the QueA family. In terms of assembly, monomer.

The protein localises to the cytoplasm. It catalyses the reaction 7-aminomethyl-7-carbaguanosine(34) in tRNA + S-adenosyl-L-methionine = epoxyqueuosine(34) in tRNA + adenine + L-methionine + 2 H(+). Its pathway is tRNA modification; tRNA-queuosine biosynthesis. Transfers and isomerizes the ribose moiety from AdoMet to the 7-aminomethyl group of 7-deazaguanine (preQ1-tRNA) to give epoxyqueuosine (oQ-tRNA). The sequence is that of S-adenosylmethionine:tRNA ribosyltransferase-isomerase from Escherichia coli O127:H6 (strain E2348/69 / EPEC).